Consider the following 281-residue polypeptide: Bifunctional protein FolD (281 aa).

NADP(+) contacts are provided by residues 165–167 (GRG), Thr-192, and Val-233.

It belongs to the tetrahydrofolate dehydrogenase/cyclohydrolase family. Homodimer.

The enzyme catalyses (6R)-5,10-methylene-5,6,7,8-tetrahydrofolate + NADP(+) = (6R)-5,10-methenyltetrahydrofolate + NADPH. It catalyses the reaction (6R)-5,10-methenyltetrahydrofolate + H2O = (6R)-10-formyltetrahydrofolate + H(+). It functions in the pathway one-carbon metabolism; tetrahydrofolate interconversion. Its function is as follows. Catalyzes the oxidation of 5,10-methylenetetrahydrofolate to 5,10-methenyltetrahydrofolate and then the hydrolysis of 5,10-methenyltetrahydrofolate to 10-formyltetrahydrofolate. In Mycobacteroides abscessus (strain ATCC 19977 / DSM 44196 / CCUG 20993 / CIP 104536 / JCM 13569 / NCTC 13031 / TMC 1543 / L948) (Mycobacterium abscessus), this protein is Bifunctional protein FolD.